The primary structure comprises 134 residues: D-ribose pyranase (134 aa).

Residue histidine 20 is the Proton donor of the active site. Residues aspartate 28, histidine 101, and tyrosine 123–asparagine 125 each bind substrate.

Belongs to the RbsD / FucU family. RbsD subfamily. As to quaternary structure, homodecamer.

Its subcellular location is the cytoplasm. The enzyme catalyses beta-D-ribopyranose = beta-D-ribofuranose. It functions in the pathway carbohydrate metabolism; D-ribose degradation; D-ribose 5-phosphate from beta-D-ribopyranose: step 1/2. Catalyzes the interconversion of beta-pyran and beta-furan forms of D-ribose. The protein is D-ribose pyranase of Pseudomonas syringae pv. syringae (strain B728a).